Consider the following 71-residue polypeptide: Large ribosomal subunit protein bL31 (71 aa).

Zn(2+) contacts are provided by Cys-16, Cys-18, Cys-38, and Cys-41.

This sequence belongs to the bacterial ribosomal protein bL31 family. Type A subfamily. As to quaternary structure, part of the 50S ribosomal subunit. Zn(2+) serves as cofactor.

Binds the 23S rRNA. This Neisseria gonorrhoeae (strain ATCC 700825 / FA 1090) protein is Large ribosomal subunit protein bL31.